The following is a 482-amino-acid chain: Catalase (482 aa).

Active-site residues include His53 and Asn126. Tyr336 contacts heme.

Belongs to the catalase family. Requires heme as cofactor.

It is found in the periplasm. It catalyses the reaction 2 H2O2 = O2 + 2 H2O. Decomposes hydrogen peroxide into water and oxygen; serves to protect cells from the toxic effects of hydrogen peroxide. Could protect cells in nodules which have a high potential to produce hydrogen peroxide because of the strong reducing conditions required for nitrogen fixation and the action of several proteins. In Aliivibrio fischeri (strain ATCC 700601 / ES114) (Vibrio fischeri), this protein is Catalase (katA).